The sequence spans 352 residues: DNA polymerase IV (352 aa).

The region spanning 7 to 187 is the UmuC domain; that stretch reads IIHIDMDCFY…LSLKKIPGIG (181 aa). Mg(2+) contacts are provided by Asp11 and Asp105. Glu106 is a catalytic residue.

This sequence belongs to the DNA polymerase type-Y family. Monomer. The cofactor is Mg(2+).

It localises to the cytoplasm. It carries out the reaction DNA(n) + a 2'-deoxyribonucleoside 5'-triphosphate = DNA(n+1) + diphosphate. Poorly processive, error-prone DNA polymerase involved in untargeted mutagenesis. Copies undamaged DNA at stalled replication forks, which arise in vivo from mismatched or misaligned primer ends. These misaligned primers can be extended by PolIV. Exhibits no 3'-5' exonuclease (proofreading) activity. May be involved in translesional synthesis, in conjunction with the beta clamp from PolIII. The sequence is that of DNA polymerase IV from Colwellia psychrerythraea (strain 34H / ATCC BAA-681) (Vibrio psychroerythus).